Reading from the N-terminus, the 72-residue chain is Translation initiation factor IF-1 (72 aa).

One can recognise an S1-like domain in the interval 1 to 72 (MAKEDCIEMQ…SKARIIFRAR (72 aa)).

The protein belongs to the IF-1 family. In terms of assembly, component of the 30S ribosomal translation pre-initiation complex which assembles on the 30S ribosome in the order IF-2 and IF-3, IF-1 and N-formylmethionyl-tRNA(fMet); mRNA recruitment can occur at any time during PIC assembly.

It is found in the cytoplasm. In terms of biological role, one of the essential components for the initiation of protein synthesis. Stabilizes the binding of IF-2 and IF-3 on the 30S subunit to which N-formylmethionyl-tRNA(fMet) subsequently binds. Helps modulate mRNA selection, yielding the 30S pre-initiation complex (PIC). Upon addition of the 50S ribosomal subunit IF-1, IF-2 and IF-3 are released leaving the mature 70S translation initiation complex. This Actinobacillus pleuropneumoniae serotype 5b (strain L20) protein is Translation initiation factor IF-1.